Reading from the N-terminus, the 309-residue chain is Probable manganese-dependent inorganic pyrophosphatase (309 aa).

Residues His9, Asp13, Asp15, Asp75, His97, and Asp149 each coordinate Mn(2+).

Belongs to the PPase class C family. The cofactor is Mn(2+).

The protein resides in the cytoplasm. The catalysed reaction is diphosphate + H2O = 2 phosphate + H(+). This chain is Probable manganese-dependent inorganic pyrophosphatase, found in Staphylococcus epidermidis (strain ATCC 35984 / DSM 28319 / BCRC 17069 / CCUG 31568 / BM 3577 / RP62A).